Consider the following 464-residue polypeptide: Soluble pyridine nucleotide transhydrogenase (464 aa).

35-44 provides a ligand contact to FAD; that stretch reads DSRRVVGGNC.

This sequence belongs to the class-I pyridine nucleotide-disulfide oxidoreductase family. FAD serves as cofactor.

Its subcellular location is the cytoplasm. The catalysed reaction is NAD(+) + NADPH = NADH + NADP(+). Its function is as follows. Conversion of NADPH, generated by peripheral catabolic pathways, to NADH, which can enter the respiratory chain for energy generation. In Pseudomonas aeruginosa (strain LESB58), this protein is Soluble pyridine nucleotide transhydrogenase.